The chain runs to 447 residues: Phosphoglucosamine mutase (447 aa).

S102 acts as the Phosphoserine intermediate in catalysis. Residues S102, D241, D243, and D245 each contribute to the Mg(2+) site. Position 102 is a phosphoserine (S102).

This sequence belongs to the phosphohexose mutase family. Mg(2+) is required as a cofactor. In terms of processing, activated by phosphorylation.

It carries out the reaction alpha-D-glucosamine 1-phosphate = D-glucosamine 6-phosphate. Its function is as follows. Catalyzes the conversion of glucosamine-6-phosphate to glucosamine-1-phosphate. The sequence is that of Phosphoglucosamine mutase from Pseudoalteromonas atlantica (strain T6c / ATCC BAA-1087).